A 355-amino-acid polypeptide reads, in one-letter code: C-C chemokine receptor type 1 (355 aa).

Over 1–34 the chain is Extracellular; the sequence is METPDTTENYDMITEFDYGDATPCHKVNERAILA. The chain crosses the membrane as a helical span at residues 35–60; that stretch reads QLLPPLYSLVFVIGVVGNLLVVLVLV. Residues 61–64 lie on the Cytoplasmic side of the membrane; that stretch reads QYKR. The chain crosses the membrane as a helical span at residues 65-91; it reads LKNMTNIYLLNLAISDLLFLFTLPFLI. The Extracellular portion of the chain corresponds to 92 to 107; sequence YYKSTDDWIFGDAMCK. A disulfide bridge connects residues cysteine 106 and cysteine 183. The helical transmembrane segment at 108–129 threads the bilayer; the sequence is ILSGFYYTGLYSEIFFIILLTI. Residues 130 to 146 are Cytoplasmic-facing; that stretch reads DRYLAIVHAVFALRART. The helical transmembrane segment at 147 to 171 threads the bilayer; sequence VTFGVITSIIIWALAILASSPLMYF. At 172 to 197 the chain is on the extracellular side; the sequence is SKTQWNIVRHSCNLHFPYESFQQWKL. The helical transmembrane segment at 198 to 223 threads the bilayer; that stretch reads FQALKLNLFGLVLPLLVMIVCYTGII. Residues 224–239 are Cytoplasmic-facing; it reads KILLRRPNEKKSKAVR. A helical membrane pass occupies residues 240–264; that stretch reads LIFVIMIIFFLFWTPYNLTELISVF. The Extracellular segment spans residues 265–281; the sequence is QEFLFTHLCEQNRQLDL. Residues 282–305 form a helical membrane-spanning segment; it reads AMEVTEVIANMHCCVNPVIYAFAG. Residues 306–355 lie on the Cytoplasmic side of the membrane; that stretch reads ERFRKYLRQLFHRRVAVHLVKWLPFLSGDRLERVSSTSPSTGEHELSAGL.

It belongs to the G-protein coupled receptor 1 family. In terms of assembly, interacts with CREB3. Interacts with CCL3. Interacts with CCL15. Interacts with CCL23. Interacts with GNAI1. Interacts with PF4/CXCL4.

It localises to the cell membrane. In terms of biological role, chemokine receptor that plays a crucial role in regulating immune cell migration, inflammation, and immune responses. Contributes to the inflammatory response by recruiting immune cells, such as monocytes, macrophages, T-cells, and dendritic cells, to sites of inflammation for the clearance of pathogens and the resolution of tissue damage. When activated by its ligands including CCL3, CCL5-9, CCL13-16 and CCL23, triggers a signaling cascade within immune cells, leading to their migration towards the source of the chemokine. For example, mediates neutrophil migration after activation by CCL3 leading to the sequential release of TNF-alpha and leukotriene B4. Also mediates monocyte migration upon CXCL4 binding. Activation by CCL5 results in neuroinflammation through the ERK1/2 signaling pathway. This is C-C chemokine receptor type 1 (CCR1) from Macaca fascicularis (Crab-eating macaque).